The primary structure comprises 574 residues: Excitatory amino acid transporter 2 (574 aa).

Residues 1 to 44 (MASTEGANNMPKQVEVRMHDSHLGSEEPKHRHLGLRLCDKLGKN) are Cytoplasmic-facing. S3, S21, and S25 each carry phosphoserine. C38 carries the S-palmitoyl cysteine lipid modification. Residues 45-64 (LLLTLTVFGVILGAVCGGLL) form a helical membrane-spanning segment. The Extracellular segment spans residues 65–87 (RLASPIHPDVVMLIAFPGDILMR). A helical membrane pass occupies residues 88–108 (MLKMLILPLIISSLITGLSGL). Residues 109 to 120 (DAKASGRLGTRA) lie on the Cytoplasmic side of the membrane. Residues 121–142 (MVYYMSTTIIAAVLGVILVLAI) traverse the membrane as a helical segment. At 143–235 (HPGNPKLKKQ…TKMVIKKGLE (93 aa)) the chain is on the extracellular side. N-linked (GlcNAc...) asparagine glycans are attached at residues N206 and N216. Residues 236 to 259 (FKDGMNVLGLIGFFIAFGIAMGKM) form a helical membrane-spanning segment. The Cytoplasmic portion of the chain corresponds to 260–268 (GDQAKLMVD). The helical transmembrane segment at 269–296 (FFNILNEIVMKLVIMIMWYSPLGIACLI) threads the bilayer. Residues 297–317 (CGKIIAIKDLEVVARQLGMYM) lie on the Extracellular side of the membrane. Residues 318–339 (VTVIIGLIIHGGIFLPLIYFVV) traverse the membrane as a helical segment. The Cytoplasmic portion of the chain corresponds to 340–344 (TRKNP). The discontinuously helical intramembrane region spans 345–375 (FSFFAGIFQAWITALGTASSAGTLPVTFRCL). L-aspartate is bound at residue 362-364 (ASS). Over 376–384 (EENLGIDKR) the chain is Cytoplasmic. Residues 385–411 (VTRFVLPVGATINMDGTALYEAVAAIF) form a helical membrane-spanning segment. The Na(+) site is built by G393, T395, and N397. T401 is an L-aspartate binding site. The Extracellular portion of the chain corresponds to 412 to 424 (IAQMNGVVLDGGQ). The segment at residues 425–458 (IVTVSLTATLASVGAASIPSAGLVTMLLILTAVG) is an intramembrane region (discontinuously helical). Residue 442–446 (IPSAG) participates in L-aspartate binding. Residues 459 to 471 (LPTEDISLLVAVD) are Extracellular-facing. The helical transmembrane segment at 472 to 493 (WLLDRMRTSVNVVGDSFGAGIV) threads the bilayer. Residues D475 and N482 each coordinate L-aspartate. The Na(+) site is built by N482 and D486. Residues 494-574 (YHLSKSELDT…VEEEPWKREK (81 aa)) lie on the Cytoplasmic side of the membrane. 4 positions are modified to phosphoserine: S506, S521, S532, and S534. Y539 carries the post-translational modification Phosphotyrosine. Residues S544, S560, and S564 each carry the phosphoserine modification.

This sequence belongs to the dicarboxylate/amino acid:cation symporter (DAACS) (TC 2.A.23) family. SLC1A2 subfamily. As to quaternary structure, homotrimer. Isoform 3 can oligomerize with isoform 1. Interacts with AJUBA. Post-translationally, glycosylated. In terms of processing, palmitoylation at Cys-38 is not required for correct subcellular localization, but is important for glutamate uptake activity.

Its subcellular location is the cell membrane. It carries out the reaction K(+)(in) + L-glutamate(out) + 3 Na(+)(out) + H(+)(out) = K(+)(out) + L-glutamate(in) + 3 Na(+)(in) + H(+)(in). The enzyme catalyses K(+)(in) + L-aspartate(out) + 3 Na(+)(out) + H(+)(out) = K(+)(out) + L-aspartate(in) + 3 Na(+)(in) + H(+)(in). It catalyses the reaction D-aspartate(out) + K(+)(in) + 3 Na(+)(out) + H(+)(out) = D-aspartate(in) + K(+)(out) + 3 Na(+)(in) + H(+)(in). Its function is as follows. Sodium-dependent, high-affinity amino acid transporter that mediates the uptake of L-glutamate and also L-aspartate and D-aspartate. Functions as a symporter that transports one amino acid molecule together with two or three Na(+) ions and one proton, in parallel with the counter-transport of one K(+) ion. Mediates Cl(-) flux that is not coupled to amino acid transport; this avoids the accumulation of negative charges due to aspartate and Na(+) symport. Essential for the rapid removal of released glutamate from the synaptic cleft, and for terminating the postsynaptic action of glutamate. This chain is Excitatory amino acid transporter 2, found in Homo sapiens (Human).